We begin with the raw amino-acid sequence, 208 residues long: Ribosomal RNA large subunit methyltransferase E (208 aa).

The S-adenosyl-L-methionine site is built by Gly63, Trp65, Asp83, Asp99, and Asp124. Residue Lys164 is the Proton acceptor of the active site.

This sequence belongs to the class I-like SAM-binding methyltransferase superfamily. RNA methyltransferase RlmE family.

The protein resides in the cytoplasm. The enzyme catalyses uridine(2552) in 23S rRNA + S-adenosyl-L-methionine = 2'-O-methyluridine(2552) in 23S rRNA + S-adenosyl-L-homocysteine + H(+). Specifically methylates the uridine in position 2552 of 23S rRNA at the 2'-O position of the ribose in the fully assembled 50S ribosomal subunit. The polypeptide is Ribosomal RNA large subunit methyltransferase E (Salmonella typhi).